The primary structure comprises 318 residues: D-alanine--D-alanine ligase (318 aa).

Residues 116-311 (KQVWQSLGIP…FQQLVLAILA (196 aa)) enclose the ATP-grasp domain. An ATP-binding site is contributed by 142-197 (STELGFPLIVKPAHEGSSIGMAKVNSAQELVAAWQDAAKYDSQVLVEQWIHGPEFT). Residues aspartate 265, glutamate 278, and asparagine 280 each contribute to the Mg(2+) site.

It belongs to the D-alanine--D-alanine ligase family. The cofactor is Mg(2+). Mn(2+) serves as cofactor.

The protein localises to the cytoplasm. It carries out the reaction 2 D-alanine + ATP = D-alanyl-D-alanine + ADP + phosphate + H(+). It functions in the pathway cell wall biogenesis; peptidoglycan biosynthesis. Functionally, cell wall formation. This chain is D-alanine--D-alanine ligase, found in Pseudomonas putida (strain GB-1).